Reading from the N-terminus, the 396-residue chain is MTEHNVRNFNINFGPQHPAAHGVLRLVLELDGEIVERVDPHIGLLHRGTEKLIETKTYLQAVPYFDRLDYVAPMNQEHAYALAVERLLGIEIPIRGQLIRVLYSEIGRILSHLLNVTTQAMDVGALTPPLWGFEEREKLMVFYERASGSRMHAAYIRPGGVHQDLPEKLVQDIGDWCDPFLKALDDIDNLLTGNRIFKQRNVDIGVVSLEDCWAWGFSGVMVRGSGAAWDLRRAQPYECYSDLEFDIPIGKNGDNYDRYLIRMIEMRQSVRIMKQCVNRLLSDAKTGPFSSIDGKVVPPKRGEMKRSMEALIHHFKLYTEGYHVPAGEVYAAVEAPKGEFGVYLVSDGSNKPYRCKIRAPGYAHLQAMDFMCRGHQLADVAAVLGSLDIVFGEVDR.

This sequence belongs to the complex I 49 kDa subunit family. In terms of assembly, NDH-1 is composed of 14 different subunits. Subunits NuoB, C, D, E, F, and G constitute the peripheral sector of the complex.

Its subcellular location is the cell inner membrane. It carries out the reaction a quinone + NADH + 5 H(+)(in) = a quinol + NAD(+) + 4 H(+)(out). Functionally, NDH-1 shuttles electrons from NADH, via FMN and iron-sulfur (Fe-S) centers, to quinones in the respiratory chain. The immediate electron acceptor for the enzyme in this species is believed to be ubiquinone. Couples the redox reaction to proton translocation (for every two electrons transferred, four hydrogen ions are translocated across the cytoplasmic membrane), and thus conserves the redox energy in a proton gradient. This is NADH-quinone oxidoreductase subunit D 1 from Rhizobium etli (strain CIAT 652).